The sequence spans 180 residues: Hypoxanthine-guanine phosphoribosyltransferase (180 aa).

Residues lysine 40, glutamate 99–threonine 107, lysine 131, and aspartate 159 each bind GMP. The active-site Proton acceptor is the aspartate 103. Aspartate 159 contacts Mg(2+).

It belongs to the purine/pyrimidine phosphoribosyltransferase family. It depends on Mg(2+) as a cofactor.

The protein resides in the cytoplasm. It carries out the reaction IMP + diphosphate = hypoxanthine + 5-phospho-alpha-D-ribose 1-diphosphate. It catalyses the reaction GMP + diphosphate = guanine + 5-phospho-alpha-D-ribose 1-diphosphate. The protein operates within purine metabolism; IMP biosynthesis via salvage pathway; IMP from hypoxanthine: step 1/1. In terms of biological role, converts guanine to guanosine monophosphate, and hypoxanthine to inosine monophosphate. Transfers the 5-phosphoribosyl group from 5-phosphoribosylpyrophosphate onto the purine. Plays a central role in the generation of purine nucleotides through the purine salvage pathway. The polypeptide is Hypoxanthine-guanine phosphoribosyltransferase (hprT) (Dictyostelium discoideum (Social amoeba)).